A 190-amino-acid polypeptide reads, in one-letter code: Large ribosomal subunit protein bL9 (190 aa).

It belongs to the bacterial ribosomal protein bL9 family.

Its function is as follows. Binds to the 23S rRNA. This Rhodobacter capsulatus (strain ATCC BAA-309 / NBRC 16581 / SB1003) protein is Large ribosomal subunit protein bL9.